Consider the following 423-residue polypeptide: Imidazolonepropionase (423 aa).

Fe(3+)-binding residues include histidine 78 and histidine 80. Residues histidine 78 and histidine 80 each contribute to the Zn(2+) site. Residues arginine 87, tyrosine 150, and histidine 183 each contribute to the 4-imidazolone-5-propanoate site. Residue tyrosine 150 coordinates N-formimidoyl-L-glutamate. Position 247 (histidine 247) interacts with Fe(3+). Histidine 247 is a binding site for Zn(2+). Position 250 (glutamate 250) interacts with 4-imidazolone-5-propanoate. Fe(3+) is bound at residue aspartate 322. Residue aspartate 322 participates in Zn(2+) binding. Residues asparagine 324 and glycine 326 each coordinate N-formimidoyl-L-glutamate. Residue serine 327 coordinates 4-imidazolone-5-propanoate.

It belongs to the metallo-dependent hydrolases superfamily. HutI family. It depends on Zn(2+) as a cofactor. Fe(3+) is required as a cofactor.

The protein resides in the cytoplasm. The catalysed reaction is 4-imidazolone-5-propanoate + H2O = N-formimidoyl-L-glutamate. The protein operates within amino-acid degradation; L-histidine degradation into L-glutamate; N-formimidoyl-L-glutamate from L-histidine: step 3/3. Functionally, catalyzes the hydrolytic cleavage of the carbon-nitrogen bond in imidazolone-5-propanoate to yield N-formimidoyl-L-glutamate. It is the third step in the universal histidine degradation pathway. The protein is Imidazolonepropionase of Bacillus cytotoxicus (strain DSM 22905 / CIP 110041 / 391-98 / NVH 391-98).